The sequence spans 93 residues: Acylphosphatase (93 aa).

Cys-5 and Cys-49 are oxidised to a cystine. Residues 5–93 enclose the Acylphosphatase-like domain; that stretch reads CIIAWVYGRV…ETLTGFSIRY (89 aa). The active site involves Asn-38.

It belongs to the acylphosphatase family.

It carries out the reaction an acyl phosphate + H2O = a carboxylate + phosphate + H(+). This is Acylphosphatase from Salmonella paratyphi A (strain ATCC 9150 / SARB42).